A 263-amino-acid chain; its full sequence is Putative hydro-lyase GK2103 (263 aa).

It belongs to the D-glutamate cyclase family.

The polypeptide is Putative hydro-lyase GK2103 (Geobacillus kaustophilus (strain HTA426)).